Here is a 526-residue protein sequence, read N- to C-terminus: MLO-like protein 1 (526 aa).

Residues 1-11 are Extracellular-facing; it reads MGHGGEGMSLE. Residues 12 to 32 traverse the membrane as a helical segment; the sequence is FTPTWVVAGVCTVIVAISLAV. The Cytoplasmic portion of the chain corresponds to 33-61; the sequence is ERLLHYFGTVLKKKKQKPLYEALQKVKEE. A helical transmembrane segment spans residues 62 to 82; the sequence is LMLLGFISLLLTVFQGLISKF. Residues 83–160 are Extracellular-facing; sequence CVKENVLMHM…LSLEALHHLH (78 aa). Residues 161–181 form a helical membrane-spanning segment; sequence IFIFVLAISHVTFCVLTVIFG. Residues 182 to 287 are Cytoplasmic-facing; sequence STRIHQWKKW…MRALEDDFKQ (106 aa). Transmembrane regions (helical) follow at residues 288–308 and 309–329; these read VVGISWYLWIFVVIFLLLNVN and GWHTYFWIAFIPFALLLAVGT. Topologically, residues 330–372 are cytoplasmic; the sequence is KLEHVIAQLAHEVAEKHVAIEGDLVVKPSDEHFWFSKPQIVLY. Residues 373 to 393 form a helical membrane-spanning segment; the sequence is LIHFILFQNAFEIAFFFWIWV. Residues 394–412 lie on the Extracellular side of the membrane; the sequence is TYGFDSCIMGQVRYIVPRL. A helical transmembrane segment spans residues 413–433; sequence VIGVFIQVLCSYSTLPLYAIV. Residues 434–526 lie on the Cytoplasmic side of the membrane; that stretch reads SQMGSSFKKA…NNEITPDHNN (93 aa). The interval 447–468 is calmodulin-binding; it reads ENVQVGLVGWAQKVKQKRDLKA. Residues 471–526 form a disordered region; it reads SNGDEGSSQAGPGPDSGSGSAPAAGPGAGFAGIQLSRVTRNNAGDTNNEITPDHNN. Residues 476-495 are compositionally biased toward low complexity; sequence GSSQAGPGPDSGSGSAPAAG. A compositionally biased stretch (polar residues) spans 506–520; it reads SRVTRNNAGDTNNEI.

This sequence belongs to the MLO family.

It is found in the cell membrane. Functionally, may be involved in modulation of pathogen defense and leaf cell death. Activity seems to be regulated by Ca(2+)-dependent calmodulin binding and seems not to require heterotrimeric G proteins. The polypeptide is MLO-like protein 1 (MLO1) (Arabidopsis thaliana (Mouse-ear cress)).